The chain runs to 214 residues: Probable transaldolase (214 aa).

K83 (schiff-base intermediate with substrate) is an active-site residue.

This sequence belongs to the transaldolase family. Type 3B subfamily.

The protein resides in the cytoplasm. The enzyme catalyses D-sedoheptulose 7-phosphate + D-glyceraldehyde 3-phosphate = D-erythrose 4-phosphate + beta-D-fructose 6-phosphate. The protein operates within carbohydrate degradation; pentose phosphate pathway; D-glyceraldehyde 3-phosphate and beta-D-fructose 6-phosphate from D-ribose 5-phosphate and D-xylulose 5-phosphate (non-oxidative stage): step 2/3. In terms of biological role, transaldolase is important for the balance of metabolites in the pentose-phosphate pathway. This chain is Probable transaldolase, found in Streptococcus pyogenes serotype M2 (strain MGAS10270).